A 599-amino-acid polypeptide reads, in one-letter code: UPF0313 protein UNCMA_01890 (599 aa).

A Radical SAM core domain is found at 281 to 557 (EDIPALRTVR…RALLQYKNPE (277 aa)). The [4Fe-4S] cluster site is built by Cys-299, Cys-303, and Cys-306.

This sequence belongs to the UPF0313 family. [4Fe-4S] cluster is required as a cofactor.

In Methanocella arvoryzae (strain DSM 22066 / NBRC 105507 / MRE50), this protein is UPF0313 protein UNCMA_01890.